A 230-amino-acid polypeptide reads, in one-letter code: NAD(P)H-hydrate epimerase (230 aa).

The YjeF N-terminal domain occupies 11–223 (YAAADIRAAE…DVGLDLSGAT (213 aa)). 59–63 (NNGGD) is a binding site for (6S)-NADPHX. The K(+) site is built by N60 and D125. (6S)-NADPHX-binding positions include 129–137 (GIGTTDSPA) and D165. S168 lines the K(+) pocket.

The protein belongs to the NnrE/AIBP family. The cofactor is K(+).

It carries out the reaction (6R)-NADHX = (6S)-NADHX. The catalysed reaction is (6R)-NADPHX = (6S)-NADPHX. Catalyzes the epimerization of the S- and R-forms of NAD(P)HX, a damaged form of NAD(P)H that is a result of enzymatic or heat-dependent hydration. This is a prerequisite for the S-specific NAD(P)H-hydrate dehydratase to allow the repair of both epimers of NAD(P)HX. The polypeptide is NAD(P)H-hydrate epimerase (Clavibacter michiganensis subsp. michiganensis (strain NCPPB 382)).